The primary structure comprises 602 residues: Elongation factor 4 (602 aa).

One can recognise a tr-type G domain in the interval 7–188; it reads ENIRNFSIIA…SIIRLVPPPK (182 aa). Residues 19 to 24 and 135 to 138 each bind GTP; these read DHGKST and NKID.

This sequence belongs to the TRAFAC class translation factor GTPase superfamily. Classic translation factor GTPase family. LepA subfamily.

It localises to the cell inner membrane. The catalysed reaction is GTP + H2O = GDP + phosphate + H(+). Functionally, required for accurate and efficient protein synthesis under certain stress conditions. May act as a fidelity factor of the translation reaction, by catalyzing a one-codon backward translocation of tRNAs on improperly translocated ribosomes. Back-translocation proceeds from a post-translocation (POST) complex to a pre-translocation (PRE) complex, thus giving elongation factor G a second chance to translocate the tRNAs correctly. Binds to ribosomes in a GTP-dependent manner. The sequence is that of Elongation factor 4 from Chlamydia muridarum (strain MoPn / Nigg).